Reading from the N-terminus, the 161-residue chain is Anaerobic nitrite reductase GLB1 (161 aa).

The Globin domain maps to 9–157 (VFTEEQEALV…LVAAIKSEMK (149 aa)). A Homodimerization motif is present at residues 42-46 (EIAPS). Heme b contacts are provided by serine 52, lysine 66, histidine 70, arginine 100, and histidine 105. The Homodimerization motif lies at 112–123 (NEHFETRFALLE).

The protein belongs to the plant globin family. Homodimer. It depends on heme b as a cofactor. In terms of tissue distribution, root specific.

The protein resides in the cytoplasm. The protein localises to the nucleus. The catalysed reaction is Fe(III)-heme b-[protein] + nitric oxide + H2O = Fe(II)-heme b-[protein] + nitrite + 2 H(+). Phytoglobin that reduces nitrite to nitric oxide (NO) under anoxic conditions (e.g. during flooding or in waterlogged soil) and upon root nodulation. Required for general plant development and during nodulation, especially for the onset of symbiosis. Monitors nitric oxide (NO) levels during early phase of the nitrogen-fixing symbiosis and buffers oxygen in functioning nodules. May not function as an oxygen storage or transport protein. Has an unusually high affinity for O(2) through a hexacoordinate heme iron because of a very low dissociation constant. This is Anaerobic nitrite reductase GLB1 (GLB1) from Trema tomentosum (Peach-leaf poison-bush).